The primary structure comprises 441 residues: G-protein coupled receptor family C group 5 member C (441 aa).

The N-terminal stretch at 1–22 (MATHKTLLMCLGLPLFFPGALA) is a signal peptide. Residues 23 to 49 (QNHAPPGCSPDLDPLYYNLCDRSGAWG) are Extracellular-facing. Residues 50–70 (IVLEAVAGAGIITTFVLTIIL) traverse the membrane as a helical segment. The Cytoplasmic segment spans residues 71-84 (VASLPFVQDTKKRS). Residues 85–105 (LLGTQVFFLLGTLGLFCLVFA) form a helical membrane-spanning segment. Topologically, residues 106–119 (CVVKPDFSTCASRR) are extracellular. The chain crosses the membrane as a helical span at residues 120–140 (FLFGVLFAICFSCLIAHTLSL). The Cytoplasmic portion of the chain corresponds to 141-154 (NFLARKNHGPRGWV). A helical membrane pass occupies residues 155 to 175 (IFTVALLLTLVEVIINTEWLI). The Extracellular portion of the chain corresponds to 176-207 (ITLVRGGGQVSTPGNGSADWTVTSPCAIANMD). N-linked (GlcNAc...) asparagine glycosylation is present at Asn190. A helical membrane pass occupies residues 208–228 (FVMALIYVMLLLLAAFLGAWP). Over 229 to 240 (TLCGRFKRWRKH) the chain is Cytoplasmic. A helical membrane pass occupies residues 241–261 (GVFVLLTTATSIAIWVVWIVM). The Extracellular portion of the chain corresponds to 262 to 278 (YTYGNKQHHSPTWDDPT). Residues 279–299 (LAIALAANAWTFVFFYVIPEV) form a helical membrane-spanning segment. At 300 to 441 (SQVTKPSPEQ…DQSPKNKTRW (142 aa)) the chain is on the cytoplasmic side. Ser343, Ser382, Ser402, and Ser405 each carry phosphoserine. At Tyr413 the chain carries Phosphotyrosine. Residues 419-441 (QVATPTKDGKISQDQSPKNKTRW) form a disordered region. A Phosphothreonine modification is found at Thr422. Positions 430 to 441 (SQDQSPKNKTRW) are enriched in polar residues. Ser434 carries the post-translational modification Phosphoserine.

The protein belongs to the G-protein coupled receptor 3 family.

The protein localises to the cell membrane. This retinoic acid-inducible G-protein coupled receptor provide evidence for a possible interaction between retinoid and G-protein signaling pathways. The chain is G-protein coupled receptor family C group 5 member C (Gprc5c) from Rattus norvegicus (Rat).